Here is a 466-residue protein sequence, read N- to C-terminus: Glutamate--tRNA ligase (466 aa).

The 'HIGH' region signature appears at 10–20 (PSPTGYLHVGG). Zn(2+) is bound by residues C99, C101, C126, and H128. The 'KMSKS' region motif lies at 237-241 (RLSKR). Residue K240 coordinates ATP.

This sequence belongs to the class-I aminoacyl-tRNA synthetase family. Glutamate--tRNA ligase type 1 subfamily. As to quaternary structure, monomer. Zn(2+) serves as cofactor.

Its subcellular location is the cytoplasm. It carries out the reaction tRNA(Glu) + L-glutamate + ATP = L-glutamyl-tRNA(Glu) + AMP + diphosphate. Catalyzes the attachment of glutamate to tRNA(Glu) in a two-step reaction: glutamate is first activated by ATP to form Glu-AMP and then transferred to the acceptor end of tRNA(Glu). The polypeptide is Glutamate--tRNA ligase (Trichlorobacter lovleyi (strain ATCC BAA-1151 / DSM 17278 / SZ) (Geobacter lovleyi)).